The following is a 288-amino-acid chain: ATP synthase gamma chain (288 aa).

It belongs to the ATPase gamma chain family. In terms of assembly, F-type ATPases have 2 components, CF(1) - the catalytic core - and CF(0) - the membrane proton channel. CF(1) has five subunits: alpha(3), beta(3), gamma(1), delta(1), epsilon(1). CF(0) has three main subunits: a, b and c.

The protein resides in the cell inner membrane. In terms of biological role, produces ATP from ADP in the presence of a proton gradient across the membrane. The gamma chain is believed to be important in regulating ATPase activity and the flow of protons through the CF(0) complex. The protein is ATP synthase gamma chain of Aeromonas hydrophila subsp. hydrophila (strain ATCC 7966 / DSM 30187 / BCRC 13018 / CCUG 14551 / JCM 1027 / KCTC 2358 / NCIMB 9240 / NCTC 8049).